We begin with the raw amino-acid sequence, 587 residues long: Aspartate--tRNA ligase (587 aa).

Glu-174 is a binding site for L-aspartate. An aspartate region spans residues 198–201 (QITK). Arg-220 is a binding site for L-aspartate. ATP is bound by residues 220 to 222 (RDE) and Gln-229. His-443 is an L-aspartate binding site. Residue Glu-477 participates in ATP binding. Residue Arg-484 participates in L-aspartate binding. 529–532 (GLDR) is a binding site for ATP.

Belongs to the class-II aminoacyl-tRNA synthetase family. Type 1 subfamily. In terms of assembly, homodimer.

Its subcellular location is the cytoplasm. It carries out the reaction tRNA(Asp) + L-aspartate + ATP = L-aspartyl-tRNA(Asp) + AMP + diphosphate. In terms of biological role, catalyzes the attachment of L-aspartate to tRNA(Asp) in a two-step reaction: L-aspartate is first activated by ATP to form Asp-AMP and then transferred to the acceptor end of tRNA(Asp). In Streptococcus pneumoniae (strain 70585), this protein is Aspartate--tRNA ligase.